The primary structure comprises 1349 residues: MKSSRTVTLYFVLIVICSSEATWSRPAEPIVHPLILQEHELAGEELLRPKRAVAVGGPVAEEYTVDVEISFENVSFLESIRAHLNSLRFPVQGNGTDILSMAMTTVCTPTGNDLLCFCEKGYQWPEERCLSSLTCQEHDSALPGRYCNCLKGLPPQGPFCQLPETYITLKIKVRLNIGFQEDLENTSSALYRSYKTDLERAFRAGYRTLPGFRSVTVTQFTKGSVVVDYIVEVASAPLPGSIHKANEQVIQNLNQTYKMDYNSFQGTPSNETKFTVTPEFIFEGDNVTLECESEFVSSNTSWFYGEKRSDIQNSDKFSIHTSIINNISLVTRLTIFNFTQHDAGLYGCNVTLDIFEYGTVRKLDVTPIRILAKEERKVVCDNNPISLNCCSENIANWSRIEWKQEGKINIEGTPETDLESSCSTYTLKADGTQCPSGSSGTTVIYTCEFVSVYGAKGSKNIAVTFTSVANLTITPDPISVSEGQSFSITCLSDVSSFDEVYWNTSAGIKIHPRFYTMRRYRDGAESVLTVKTSTREWNGTYHCIFRYKNSYSIATKDVTVHPLPLESDIMMDPLEASGLCTSSHQFKCCIEENDGEEYIVTFHVDSSSFPAEREVIGKQACYTYSLPGKLPSRCPKDIDVFCHFTNAANSSVRSPSMKLTLVPGKNITCQDPIIGIGEPGKVIQKLCQFAGVSRSPGQTIGGTVTYKCVGSQWKEETRACISAPINGLLQLAKALIKSPSQDQKLPKYLRDLSVSTGKEEQDIRSSPGSLGAIISILDLLSTVPTQVNSEMMRDILATINVILDKSTLNSWEKLLQQQSNQSSQFLQSVERFSKALELGDSTPPFLFHPNVQMKSMVIKRGHAQMYQQKFVFTDSDLWGDVAIDECQLGSLQPDSSIVTVAFPTLKAILAQDGQRKTPSNSLVMTTTVSHNIVKPFRISMTFKNNHRSGGKPQCVFWNFSLANNTGGWDSSGCTVEDDGRDNRDRVFCKCNHLTSFSILMSPDSPDPGSLLKILLDIISYIGLGFSIVSLAACLVVEAMVWKSVTKNRTSYMRHICIVNIALCLLIADIWFIVAGAIHDGHYPLNETACVAATFFIHFFYLSVFFWMLTLGLMLFYRLIFILHDASKSTQKAIAFSLGYGCPLIISSITVGVTQPQEVYMRKNACWLNWEDTRALLAFAIPALIIVVVNVSITVVVITKILRPSVGDKPGKQEKSSLFQISKSIGVLTPLLGLTWGFGLATVIQGSNAVFHIIFTLLNAFQGLFILLFGCLWDQKVQEALLHKFSLSRWSSQHSKSTSLGSSTPVFSMSSPISRRFNNLFGKTGTYNVSTPETTSSSVENSSSAYSLLN.

The N-terminal stretch at 1 to 24 is a signal peptide; the sequence is MKSSRTVTLYFVLIVICSSEATWS. At 25–1016 the chain is on the extracellular side; it reads RPAEPIVHPL…PGSLLKILLD (992 aa). 16 N-linked (GlcNAc...) asparagine glycosylation sites follow: N73, N94, N185, N254, N270, N286, N299, N326, N337, N349, N396, N470, N503, N538, N649, and N666. An SEA domain is found at 163-271; sequence PETYITLKIK…NSFQGTPSNE (109 aa). 3 consecutive Ig-like domains span residues 268–366, 367–464, and 469–559; these read PSNE…LDVT, PIRI…IAVT, and ANLT…KDVT. C291 and C348 are joined by a disulfide. An intrachain disulfide couples C389 to C447. The cysteines at positions 490 and 543 are disulfide-linked. Residue S819 is modified to Phosphoserine. N-linked (GlcNAc...) asparagine glycosylation is found at N820, N958, and N963. The 165-residue stretch at 842–1006 folds into the GAIN-B domain; that stretch reads TPPFLFHPNV…SILMSPDSPD (165 aa). Cystine bridges form between C954–C988 and C973–C990. The interval 954–1006 is GPS; it reads CVFWNFSLANNTGGWDSSGCTVEDDGRDNRDRVFCKCNHLTSFSILMSPDSPD. The tethered agonist stretch occupies residues 994–1009; that stretch reads TSFSILMSPDSPDPGS. A helical transmembrane segment spans residues 1017-1036; the sequence is IISYIGLGFSIVSLAACLVV. Over 1037–1055 the chain is Cytoplasmic; sequence EAMVWKSVTKNRTSYMRHI. Residues 1056 to 1078 form a helical membrane-spanning segment; it reads CIVNIALCLLIADIWFIVAGAIH. Residues 1079 to 1097 are Extracellular-facing; that stretch reads DGHYPLNETACVAATFFIH. N1085 is a glycosylation site (N-linked (GlcNAc...) asparagine). A helical membrane pass occupies residues 1098–1120; that stretch reads FFYLSVFFWMLTLGLMLFYRLIF. Residues 1121–1131 lie on the Cytoplasmic side of the membrane; that stretch reads ILHDASKSTQK. Residues 1132–1154 traverse the membrane as a helical segment; the sequence is AIAFSLGYGCPLIISSITVGVTQ. The Extracellular portion of the chain corresponds to 1155-1173; it reads PQEVYMRKNACWLNWEDTR. A helical membrane pass occupies residues 1174 to 1196; that stretch reads ALLAFAIPALIIVVVNVSITVVV. Residues 1197 to 1216 are Cytoplasmic-facing; sequence ITKILRPSVGDKPGKQEKSS. A helical membrane pass occupies residues 1217–1239; sequence LFQISKSIGVLTPLLGLTWGFGL. The Extracellular portion of the chain corresponds to 1240–1248; sequence ATVIQGSNA. Residues 1249-1271 form a helical membrane-spanning segment; it reads VFHIIFTLLNAFQGLFILLFGCL. Over 1272–1349 the chain is Cytoplasmic; the sequence is WDQKVQEALL…NSSSAYSLLN (78 aa). A Phosphothreonine modification is found at T1303. S1310 bears the Phosphoserine mark. Positions 1329–1343 are enriched in low complexity; the sequence is STPETTSSSVENSSS. Positions 1329–1349 are disordered; the sequence is STPETTSSSVENSSSAYSLLN.

It belongs to the G-protein coupled receptor 2 family. Adhesion G-protein coupled receptor (ADGR) subfamily. In terms of assembly, homodimer; disulfide-linked. Heterodimer of 2 chains generated by proteolytic processing; the large extracellular N-terminal fragment and the membrane-bound C-terminal fragment predominantly remain associated and non-covalently linked. Fragment generates by the processing enzyme furin remains attached to the extracellular N-terminal fragment. Interacts (via N-terminal extracellular domain) with SFTPD. Post-translationally, highly glycosylated. In terms of processing, proteolytically cleaved at multiple sites: one in the GPS region of the GAIN-B domain (S1 site) and the other in the SEA domain (S2 site). The proteolytic cleavage at S1 site generates an extracellular subunit and a seven-transmembrane subunit. The proteolytic cleavage at S2 site generates a fragment that undergoes proteolytic cleavage by the processing enzyme furin. As to expression, highly expressed in the lung and to a much lesser extent in the kidney and heart. Dense localization in alveolar walls of the lung and in the intercalated cells of the collecting duct of the kidney.

Its subcellular location is the cell membrane. As an adhesion G protein-coupled receptor (aGPCR) exhibits a large N-terminal extracellular domain containing highly conserved GPCR autoproteolysis-inducing (GAIN) domain. During synthesis, intracellular autoproteolytic processing of nascent chain within the GAIN domain generates a mature protein, consisting of an N-terminal fragment that is non-covalently linked to the C-terminal fragment. The mature protein is routed to the plasma membrane where the N- and C-terminal fragments remain associated, forming the holoreceptor. Dissociation of the aGPCR fragments stimulates G protein signaling through the action of the tethered-peptide agonist stalk that is occluded within the GAIN domain in the holoreceptor form. This dissociation might be induced by ligand binding, such as that of sFNDC4. Receptor that plays a critical role in lung surfactant homeostasis. May play a role in controlling adipocyte function. Functionally, adhesion G protein-coupled receptor. In alveolar type II (ATII or AT2) cells, required for normal lung surfactant homeostasis. Modulation of both surfactant secretion and uptake by ATII cells is mediated by the downstream activation of GNAQ/GNA11 proteins and may be a consequence of increased cortical F-actin assembly induced by ADGRF5 activation. In the kidney, may play a role in the regulation of acid excretion into the primary urine, possibly by regulating the surface expression of V-ATPase proton pump. As a receptor for soluble FNDC4 (sFNDC4), required for proper systemic glucose tolerance, specifically sensitizing white adipose tissue to insulin. Also plays a role in sFNDC4-induced decrease of local inflammation in white adipose tissue. The protein is Adhesion G protein-coupled receptor F5 (Adgrf5) of Rattus norvegicus (Rat).